We begin with the raw amino-acid sequence, 27 residues long: Carcinustatin-20 (27 aa).

A Leucine amide modification is found at Leu-27.

The protein belongs to the allatostatin family.

It is found in the secreted. Functionally, may act as a neurotransmitter or neuromodulator. This is Carcinustatin-20 from Carcinus maenas (Common shore crab).